Here is a 504-residue protein sequence, read N- to C-terminus: Splicing factor SF3a60 homolog (504 aa).

Ser-2 is modified (N-acetylserine). Disordered regions lie at residues 293 to 319 and 355 to 374; these read DKKHFARPPHNGKQNGDAKSTHESENA and YEEMEGEREGEEANTELESD. A compositionally biased stretch (acidic residues) spans 356–374; that stretch reads EEMEGEREGEEANTELESD. A Phosphoserine modification is found at Ser-373. The Matrin-type zinc-finger motif lies at 409–440; that stretch reads FKCEICGNYSYWGRRAFERHFKEWRHQHGMRC.

The protein belongs to the SF3A3 family. As to expression, expressed at moderate levels in all sporophytic tissues with strongest expression in gametophytes.

It is found in the nucleus. In terms of biological role, splicing factor homolog to SF3a60 that may be involved in pre-spliceosome formation. Is necessary for gametic cell fate determination. This is Splicing factor SF3a60 homolog from Arabidopsis thaliana (Mouse-ear cress).